The following is a 194-amino-acid chain: Orotate phosphoribosyltransferase (194 aa).

114-122 (EDVVTTGKS) lines the 5-phospho-alpha-D-ribose 1-diphosphate pocket. Orotate contacts are provided by T118 and R146.

Belongs to the purine/pyrimidine phosphoribosyltransferase family. PyrE subfamily. Homodimer. Mg(2+) serves as cofactor.

The enzyme catalyses orotidine 5'-phosphate + diphosphate = orotate + 5-phospho-alpha-D-ribose 1-diphosphate. It functions in the pathway pyrimidine metabolism; UMP biosynthesis via de novo pathway; UMP from orotate: step 1/2. In terms of biological role, catalyzes the transfer of a ribosyl phosphate group from 5-phosphoribose 1-diphosphate to orotate, leading to the formation of orotidine monophosphate (OMP). The sequence is that of Orotate phosphoribosyltransferase from Clostridioides difficile (strain 630) (Peptoclostridium difficile).